The chain runs to 48 residues: Photosystem II reaction center protein K (48 aa).

Positions 1 to 11 (MFPSTNQEVLA) are excised as a propeptide. Residues 23-43 (IVDVLPIIPLLFLLLAFVWQA) form a helical membrane-spanning segment.

The protein belongs to the PsbK family. In terms of assembly, PSII is composed of 1 copy each of membrane proteins PsbA, PsbB, PsbC, PsbD, PsbE, PsbF, PsbH, PsbI, PsbJ, PsbK, PsbL, PsbM, PsbT, PsbY, PsbZ, Psb30/Ycf12, at least 3 peripheral proteins of the oxygen-evolving complex and a large number of cofactors. It forms dimeric complexes.

The protein resides in the plastid. It is found in the chloroplast thylakoid membrane. In terms of biological role, one of the components of the core complex of photosystem II (PSII). PSII is a light-driven water:plastoquinone oxidoreductase that uses light energy to abstract electrons from H(2)O, generating O(2) and a proton gradient subsequently used for ATP formation. It consists of a core antenna complex that captures photons, and an electron transfer chain that converts photonic excitation into a charge separation. The protein is Photosystem II reaction center protein K of Euglena sanguinea.